Reading from the N-terminus, the 116-residue chain is Spermadhesin Z13 (116 aa).

2 disulfides stabilise this stretch: C14–C35 and C58–C79. The region spanning 14–115 (CGDLYGEEYG…PDFFLIFRRV (102 aa)) is the CUB domain.

It belongs to the spermadhesin family. Homodimer; disulfide-linked. Seminal plasma.

It is found in the secreted. In terms of biological role, may be involved in the fertilization process. This is Spermadhesin Z13 from Bos taurus (Bovine).